Here is a 323-residue protein sequence, read N- to C-terminus: D-specific alpha-keto acid dehydrogenase (323 aa).

NAD(+) is bound by residues 157–158 (HI), 230–232 (TGR), and D256. The active site involves R232. E261 is an active-site residue. The active-site Proton donor is H293. 293 to 296 (HTAY) provides a ligand contact to NAD(+).

This sequence belongs to the D-isomer specific 2-hydroxyacid dehydrogenase family.

Required for high-level resistance to glycopeptides antibiotics. Catalyzes the reduction of 2-keto acids to 2-D-hydroxy acids that give rise to peptidoglycan precursors that terminate in the depsipeptide D-alanine-2-lactate rather than the dipeptide D-alanine-D-alanine thus preventing vancomycin binding. This chain is D-specific alpha-keto acid dehydrogenase (vanHB), found in Enterococcus faecalis (strain ATCC 700802 / V583).